Reading from the N-terminus, the 2462-residue chain is Serine/threonine-protein kinase Wnk (2462 aa).

Disordered regions lie at residues 18 to 133 (NRAR…ASKS), 146 to 248 (NTLP…KSSS), and 365 to 461 (EDDV…DDDP). 2 stretches are compositionally biased toward polar residues: residues 29 to 58 (DGTT…NIQK) and 65 to 78 (NRSA…NPTS). Residues 94–124 (TLSAHTSTSSTTSIQSSPIEPASSLPTLNTT) are compositionally biased toward low complexity. Positions 146-155 (NTLPGKTASS) are enriched in polar residues. Basic and acidic residues-rich tracts occupy residues 190-205 (QSRE…KIEP), 237-247 (DTKKMEARKSS), and 396-413 (QSEK…KAES). The segment covering 414 to 452 (SEASAEEAAVTGSSTDASASPLPSTSLVSTTSSATSITK) has biased composition (low complexity). The region spanning 471–729 (FKYDKEVGRG…CNELLESEFF (259 aa)) is the Protein kinase domain. ATP is bound by residues S481, 551-554 (TELM), and K601. D618 acts as the Proton acceptor in catalysis. A phosphoserine; by autocatalysis mark is found at S628 and S632. 3 disordered regions span residues 844–873 (LQKQ…DGVK), 893–923 (LALS…QPVQ), and 1006–1055 (PQQQ…LQQQ). The segment covering 855 to 870 (VDEDEEEEEESEDEED) has biased composition (acidic residues). Polar residues predominate over residues 893–918 (LALSTNSVEPQQLSTRSNTSIPNSGI). 2 stretches are compositionally biased toward low complexity: residues 1006–1034 (PQQQ…QPQT) and 1041–1055 (HEQQ…LQQQ). The stretch at 1142 to 1178 (AQHQLQQLQQQQLQQQQLQQQQQIQQQQLQQQQLQQQ) forms a coiled coil. Positions 1236–1251 (QGGQVTLSDAQQQQHP) are enriched in polar residues. 9 disordered regions span residues 1236–1256 (QGGQ…FSAV), 1322–1382 (QQQQ…EQIS), 1418–1465 (GALE…PKLS), 1554–1578 (LTRQ…SDIT), 1615–1699 (NIPN…KDKK), 1762–1790 (DTSE…GNQG), 1828–1895 (QASP…SVGS), 1929–1966 (HEKQ…SINQ), and 2122–2229 (THVQ…FIQS). The span at 1559-1568 (STFRSHQRHR) shows a compositional bias: basic residues. The span at 1627–1641 (STPPTTTSTMSSSST) shows a compositional bias: low complexity. The span at 1642-1674 (ASRDAPNSSNDVTIGSGSVSRKTSTASEYTSLS) shows a compositional bias: polar residues. Polar residues-rich tracts occupy residues 1828–1852 (QASP…TKPN), 1861–1894 (SVGQ…NSVG), and 1943–1966 (SATS…SINQ). Low complexity predominate over residues 2125–2136 (QQPSNLQPQQQS). Residues 2137–2160 (VHPNMTQQPQQTPLNGHPSMVNTL) show a composition bias toward polar residues. The span at 2161-2211 (QQQPPQQSLPMQTIQSQQQQHNQMPIISQQQQQQILMQQQQQQGSQQGSQQ) shows a compositional bias: low complexity. Over residues 2212–2229 (FNLPGTQQTHPQHQFIQS) the composition is skewed to polar residues.

It belongs to the protein kinase superfamily. Ser/Thr protein kinase family. WNK subfamily. It depends on Mg(2+) as a cofactor. Post-translationally, autophosphorylated. Autophosphorylation at Ser-628 and Ser-632 promotes its activity.

The protein localises to the cytoplasm. The catalysed reaction is L-seryl-[protein] + ATP = O-phospho-L-seryl-[protein] + ADP + H(+). It carries out the reaction L-threonyl-[protein] + ATP = O-phospho-L-threonyl-[protein] + ADP + H(+). Activated in response to hyperosmotic stress: cell shrinkage promotes formation of a membraneless compartment that concentrates wnk-1 with its downstrem substrates. Activation requires autophosphorylation. Autophosphorylation and subsequent activation is inhibited by increases in intracellular Cl(-) or K(+). In terms of biological role, serine/threonine-protein kinase component of the WNK-SPAK/OSR1 kinase cascade, which plays an important role in the regulation of electrolyte homeostasis and regulatory volume increase in response to hyperosmotic stress. Wnk mediates regulatory volume increase in response to hyperosmotic stress by acting as a molecular crowding sensor, which senses cell shrinkage and mediates formation of a membraneless compartment by undergoing liquid-liquid phase separation. The membraneless compartment concentrates Wnk with its substrate Fray, promoting Wnk-dependent phosphorylation and activation of downstream kinase Fray. Following activation, Fray catalyzes phosphorylation of ion cotransporters Ncc69 and Irk1, regulating their activity. Phosphorylation of Na-K-Cl cotransporter Ncc69 promotes its activation and ion influx. Involved in circadian rhythms in small ventral lateral (sLNv) pacemaker neurons: in the morning, Wnk activity is repressed by high levels of intracellular chloride; in contrast Wnk activation in the evening promotes the activation of the inwardly rectifying potassium channel Irk1 via Fray. Acts as a positive regulator of the canonical Wnt signaling pathway during wing disk development. The chain is Serine/threonine-protein kinase Wnk from Drosophila melanogaster (Fruit fly).